The chain runs to 244 residues: MERLQKVIAHAGVASRRKAEELIKEGKVKVNGKVVTELGVKVTGSDQIEVNGLKVEREEPVYFLLYKPRGVISAAQDDKGRKVVTDFFKNIPQRIYPIGRLDYDTSGLLLLTNDGEFANKLMHPKYEIDKTYVAKVKGIPPKELLRKLERGIRLEEGKTAPAKAKLLSLDKKKQTSIIQLTIHEGRNRQVRRMFEAIGHEVIKLKREEYAFLNLRGLHTGDARELTPHEVKRLRALADHGKNAF.

Positions 2-68 (ERLQKVIAHA…EPVYFLLYKP (67 aa)) constitute an S4 RNA-binding domain. Asp-102 acts as the Nucleophile in catalysis.

The protein belongs to the pseudouridine synthase RsuA family.

It carries out the reaction uridine(2605) in 23S rRNA = pseudouridine(2605) in 23S rRNA. Responsible for synthesis of pseudouridine from uracil-2633 in 23S ribosomal RNA. In Bacillus subtilis (strain 168), this protein is Ribosomal large subunit pseudouridine synthase B (rluB).